A 340-amino-acid polypeptide reads, in one-letter code: Phenylalanine--tRNA ligase alpha subunit (340 aa).

Glu255 provides a ligand contact to Mg(2+).

This sequence belongs to the class-II aminoacyl-tRNA synthetase family. Phe-tRNA synthetase alpha subunit type 1 subfamily. As to quaternary structure, tetramer of two alpha and two beta subunits. The cofactor is Mg(2+).

Its subcellular location is the cytoplasm. It carries out the reaction tRNA(Phe) + L-phenylalanine + ATP = L-phenylalanyl-tRNA(Phe) + AMP + diphosphate + H(+). The chain is Phenylalanine--tRNA ligase alpha subunit from Desulfitobacterium hafniense (strain Y51).